A 368-amino-acid polypeptide reads, in one-letter code: tRNA 2-selenouridine synthase (368 aa).

The Rhodanese domain occupies 15–138; it reads MLSGHPMIDV…MRQYLIEVID (124 aa). Cys98 functions as the S-selanylcysteine intermediate in the catalytic mechanism.

It belongs to the SelU family. As to quaternary structure, monomer.

It catalyses the reaction 5-methylaminomethyl-2-thiouridine(34) in tRNA + selenophosphate + (2E)-geranyl diphosphate + H2O + H(+) = 5-methylaminomethyl-2-selenouridine(34) in tRNA + (2E)-thiogeraniol + phosphate + diphosphate. The catalysed reaction is 5-methylaminomethyl-2-thiouridine(34) in tRNA + (2E)-geranyl diphosphate = 5-methylaminomethyl-S-(2E)-geranyl-thiouridine(34) in tRNA + diphosphate. It carries out the reaction 5-methylaminomethyl-S-(2E)-geranyl-thiouridine(34) in tRNA + selenophosphate + H(+) = 5-methylaminomethyl-2-(Se-phospho)selenouridine(34) in tRNA + (2E)-thiogeraniol. The enzyme catalyses 5-methylaminomethyl-2-(Se-phospho)selenouridine(34) in tRNA + H2O = 5-methylaminomethyl-2-selenouridine(34) in tRNA + phosphate. Involved in the post-transcriptional modification of the uridine at the wobble position (U34) of tRNA(Lys), tRNA(Glu) and tRNA(Gln). Catalyzes the conversion of 2-thiouridine (S2U-RNA) to 2-selenouridine (Se2U-RNA). Acts in a two-step process involving geranylation of 2-thiouridine (S2U) to S-geranyl-2-thiouridine (geS2U) and subsequent selenation of the latter derivative to 2-selenouridine (Se2U) in the tRNA chain. The polypeptide is tRNA 2-selenouridine synthase (Shewanella woodyi (strain ATCC 51908 / MS32)).